The primary structure comprises 161 residues: TRAF-interacting protein with FHA domain-containing protein B (161 aa).

Residues 36 to 91 form the FHA domain; the sequence is LLLGRGQDAHLQLQLPRLSRRHLSLEPYLEKGSALLAFCLKALSRKGCVWVNGLTL.

As to quaternary structure, interacts with TIFA.

In terms of biological role, inhibits TIFA-mediated TRAF6 activation possibly by inducing a conformational change in TIFA. The polypeptide is TRAF-interacting protein with FHA domain-containing protein B (Homo sapiens (Human)).